We begin with the raw amino-acid sequence, 338 residues long: Lipoate-protein ligase A (338 aa).

The BPL/LPL catalytic domain occupies Pro29–Val216. ATP contacts are provided by residues Arg71, Gly76–Phe79, and Lys134. (R)-lipoate is bound at residue Lys134.

Belongs to the LplA family. As to quaternary structure, monomer.

Its subcellular location is the cytoplasm. It catalyses the reaction L-lysyl-[lipoyl-carrier protein] + (R)-lipoate + ATP = N(6)-[(R)-lipoyl]-L-lysyl-[lipoyl-carrier protein] + AMP + diphosphate + H(+). Its pathway is protein modification; protein lipoylation via exogenous pathway; protein N(6)-(lipoyl)lysine from lipoate: step 1/2. It functions in the pathway protein modification; protein lipoylation via exogenous pathway; protein N(6)-(lipoyl)lysine from lipoate: step 2/2. Catalyzes both the ATP-dependent activation of exogenously supplied lipoate to lipoyl-AMP and the transfer of the activated lipoyl onto the lipoyl domains of lipoate-dependent enzymes. The polypeptide is Lipoate-protein ligase A (Salmonella arizonae (strain ATCC BAA-731 / CDC346-86 / RSK2980)).